A 147-amino-acid chain; its full sequence is Hemoglobin subunit epsilon (147 aa).

One can recognise a Globin domain in the interval 3–147 (HFTPEEKCII…VAIALAHKYH (145 aa)). The residue at position 51 (serine 51) is a Phosphoserine. Residues histidine 64 and histidine 93 each contribute to the heme b site.

Belongs to the globin family. Red blood cells.

Its function is as follows. Hemoglobin epsilon chain is a beta-type chain found in early embryos. The protein is Hemoglobin subunit epsilon (HBE1) of Oryctolagus cuniculus (Rabbit).